The sequence spans 220 residues: Early protein OPG038 (220 aa).

Positions 1–17 (MVYKLVLLFCIASLGYS) are cleaved as a signal peptide. N-linked (GlcNAc...) asparagine; by host glycans are attached at residues Asn-49, Asn-79, Asn-118, and Asn-154.

Belongs to the orthopoxvirus OPG038 family. Homooligomer. Interacts with host CD80 and CD86 when secreted. In terms of processing, glycosylated by host.

Its subcellular location is the host endoplasmic reticulum. The protein resides in the secreted. Functionally, plays a role in immune evasion. When secreted, inhibits T-cell activation by preventing the binding of host CD80 and CD86 to soluble CTLA4 and CD28. In the infected cell, may inhibits host NF kappa B activation. The protein is Early protein OPG038 (OPG038) of Cynomys gunnisoni (Gunnison's prairie dog).